The sequence spans 300 residues: Free fatty acid receptor 1 (300 aa).

The Extracellular segment spans residues 1–8; that stretch reads MDLPPQLS. Residues 9-31 form a helical membrane-spanning segment; sequence FALYVAAFALGFPLNVLAIRGAR. The Cytoplasmic portion of the chain corresponds to 32–41; that stretch reads AHARRRLTPS. A helical membrane pass occupies residues 42–64; that stretch reads LVYALNLGCSDLLLTVSLPLKAV. Over 65 to 79 the chain is Extracellular; that stretch reads EALASGAWPLPASLC. Cysteines 79 and 170 form a disulfide. A helical transmembrane segment spans residues 80 to 101; it reads PVFGVAHFAPLYAGGGFLAALS. Topologically, residues 102 to 121 are cytoplasmic; sequence AGRYLGAAFPLGYQAFRRPC. Residues 122–142 traverse the membrane as a helical segment; it reads YSWGVCAAIWALVLCHLGLVF. Topologically, residues 143-178 are extracellular; sequence VLEAPGGWLDHSNTSLGINTPVNGSPVCLEAWDPAS. N-linked (GlcNAc...) asparagine glycosylation occurs at asparagine 155. Residues 179-200 traverse the membrane as a helical segment; the sequence is AGPARFSLSLLLFFLPLAITAF. The Cytoplasmic segment spans residues 201-223; the sequence is CYVGCLRALAHSGLTHRRKLRAA. The chain crosses the membrane as a helical span at residues 224-248; that stretch reads WVAGGALLTLLLCVGPYNASNVASF. Topologically, residues 249-256 are extracellular; that stretch reads LNPNLGGS. Residues 257-279 form a helical membrane-spanning segment; it reads WRKLGLITGAWSVVLNPLVTGYL. The Cytoplasmic portion of the chain corresponds to 280–300; the sequence is GRGPGLKTVCAARTQGSTSQK.

The protein belongs to the G-protein coupled receptor 1 family.

It is found in the cell membrane. G-protein coupled receptor for medium and long chain saturated and unsaturated fatty acids that plays an important role in glucose homeostasis. Fatty acid binding increases glucose-stimulated insulin secretion, and may also enhance the secretion of glucagon-like peptide 1 (GLP-1). May also play a role in bone homeostasis; receptor signaling activates pathways that inhibit osteoclast differentiation. Ligand binding leads to a conformation change that triggers signaling via G-proteins that activate phospholipase C, leading to an increase of the intracellular calcium concentration. Seems to act through a G(q) and G(i)-mediated pathway. Mediates the anti-inflammatory effects of omega-3 polyunsaturated fatty acids (PUFAs) via inhibition of NLRP3 inflammasome activation. The sequence is that of Free fatty acid receptor 1 (FFAR1) from Macaca fascicularis (Crab-eating macaque).